A 553-amino-acid chain; its full sequence is Arginine--tRNA ligase (553 aa).

The 'HIGH' region motif lies at 130-140 (ANPTGDLHIGH).

It belongs to the class-I aminoacyl-tRNA synthetase family. Monomer.

It localises to the cytoplasm. The enzyme catalyses tRNA(Arg) + L-arginine + ATP = L-arginyl-tRNA(Arg) + AMP + diphosphate. This Staphylococcus aureus (strain MRSA252) protein is Arginine--tRNA ligase.